Consider the following 61-residue polypeptide: Small ribosomal subunit protein uS14 (61 aa).

Residues cysteine 24, cysteine 27, cysteine 40, and cysteine 43 each coordinate Zn(2+).

Belongs to the universal ribosomal protein uS14 family. Zinc-binding uS14 subfamily. As to quaternary structure, part of the 30S ribosomal subunit. Contacts proteins S3 and S10. The cofactor is Zn(2+).

Binds 16S rRNA, required for the assembly of 30S particles and may also be responsible for determining the conformation of the 16S rRNA at the A site. The sequence is that of Small ribosomal subunit protein uS14 from Alkaliphilus oremlandii (strain OhILAs) (Clostridium oremlandii (strain OhILAs)).